Consider the following 611-residue polypeptide: L-tyrosine decarboxylase (611 aa).

Residues 151 to 152 (GS), threonine 292, and 382 to 384 (DPH) contribute to the pyridoxal 5'-phosphate site. Lysine 385 is subject to N6-(pyridoxal phosphate)lysine. Tyrosine 413 acts as the Proton donor in catalysis. Serine 433 contributes to the pyridoxal 5'-phosphate binding site.

This sequence belongs to the group II decarboxylase family. Tyrosine decarboxylase subfamily. Homodimer. The cofactor is pyridoxal 5'-phosphate.

The catalysed reaction is L-tyrosine + H(+) = tyramine + CO2. It catalyses the reaction L-dopa + H(+) = dopamine + CO2. Its pathway is amino-acid metabolism. Its activity is regulated as follows. Levodopa decarboxylation is not inhibited by carbidopa, benserazide, and methyldopa, that are three human L-dopa decarboxylase inhibitors. Functionally, catalyzes the decarboxylation of L-tyrosine to produce tyramine. Plays a role in acid resistance since tyramine production via tyrosine decarboxylation appears to provide a cytosolic pH maintenance mechanism that helps the bacterium cope with acid stress such as that encountered in gastrointestinal tract (GIT) environments. Therefore, may contribute to the colonization of the human GIT by E.faecium. Its function is as follows. Also involved in drug metabolism, being able to catalyze decarboxylation of levodopa (L-dopa) to dopamine. In gut microbiota this enzyme is in fact exclusively responsible for the decarboxylation of levodopa, and thus reduces in situ levels of levodopa in the treatment of Parkinson's disease. It was shown that abundance of bacterial tyrosine decarboxylase in the proximal small intestine - the primary site of levodopa absorption - contributes to interindividual variation in drug efficacy and can explain the requirement for an increased dosage regimen of levodopa treatment in Parkinson's disease patients. This chain is L-tyrosine decarboxylase, found in Enterococcus faecium (Streptococcus faecium).